An 86-amino-acid chain; its full sequence is MGCCQDKNRWASDEQARDEVTEDGREGNEVDNSGRRKQRSNESLLITVLWRRLSMFSRRESSRSGKQDNQMQERKHEGSHKEPEKG.

Positions 1–34 (MGCCQDKNRWASDEQARDEVTEDGREGNEVDNSG) are enriched in basic and acidic residues. Disordered regions lie at residues 1–43 (MGCC…SNES) and 57–86 (SRRE…PEKG).

In terms of tissue distribution, expressed in Testis.

The chain is Testis-expressed protein 54 from Mus musculus (Mouse).